The chain runs to 113 residues: uncharacterized protein (113 aa).

The first 38 residues, 1 to 38 (MVKIERKATDSAYHEFTKILTSSAQLMAFLNQSDFVKA), serve as a signal peptide directing secretion.

This is an uncharacterized protein from Haemophilus influenzae (strain ATCC 51907 / DSM 11121 / KW20 / Rd).